A 328-amino-acid polypeptide reads, in one-letter code: Eukaryotic translation initiation factor 3 subunit I (328 aa).

WD repeat units follow at residues 8-47 (GHERAITQIKYNREGDLIFSTAKDHKPSVWFSLNGERLGT), 50-91 (GHQG…GTIP), 148-187 (SIQTKITSMLWGALDETVITGHENGSIRIWDLRTAKELNS), 190-229 (DHTGVINDMQLSADGTMLVSASKDTTAKLFDSESLMCLKT), and 287-328 (GHFG…FVFE).

The protein belongs to the eIF-3 subunit I family. In terms of assembly, component of the eukaryotic translation initiation factor 3 (eIF-3) complex.

Its subcellular location is the cytoplasm. Its function is as follows. Component of the eukaryotic translation initiation factor 3 (eIF-3) complex, which is involved in protein synthesis of a specialized repertoire of mRNAs and, together with other initiation factors, stimulates binding of mRNA and methionyl-tRNAi to the 40S ribosome. The eIF-3 complex specifically targets and initiates translation of a subset of mRNAs involved in cell proliferation. This is Eukaryotic translation initiation factor 3 subunit I from Culex quinquefasciatus (Southern house mosquito).